Here is a 251-residue protein sequence, read N- to C-terminus: Adapter protein MecA (251 aa).

Belongs to the MecA family. In terms of assembly, homodimer.

Its function is as follows. Enables the recognition and targeting of unfolded and aggregated proteins to the ClpC protease or to other proteins involved in proteolysis. The protein is Adapter protein MecA of Streptococcus agalactiae serotype Ia (strain ATCC 27591 / A909 / CDC SS700).